The following is a 110-amino-acid chain: MTTKIRIVIRSFDHPFLENHFGGLPPYTWKIGLPESRVLYTVLRSPHIDKKSREQFEMEIKKKYLVIKTEKHELRKKFFWLKRQRLFGAQYEILFFCKTRSDKGKLQRLL.

Belongs to the universal ribosomal protein uS10 family.

It is found in the mitochondrion. This chain is Small ribosomal subunit protein uS10m (RPS10), found in Pisum sativum (Garden pea).